The chain runs to 186 residues: dCTP deaminase (186 aa).

107-112 (KSSYAR) is a binding site for dCTP. Residue Glu133 is the Proton donor/acceptor of the active site. DCTP contacts are provided by Gln152, Tyr166, and Gln176.

This sequence belongs to the dCTP deaminase family. Homotrimer.

It catalyses the reaction dCTP + H2O + H(+) = dUTP + NH4(+). The protein operates within pyrimidine metabolism; dUMP biosynthesis; dUMP from dCTP (dUTP route): step 1/2. Its function is as follows. Catalyzes the deamination of dCTP to dUTP. In Chloroflexus aggregans (strain MD-66 / DSM 9485), this protein is dCTP deaminase.